Consider the following 536-residue polypeptide: E3 ubiquitin-protein ligase Godzilla (536 aa).

The N-terminal stretch at 1-21 is a signal peptide; it reads MSKRSCQILTLLGLCLVCHEA. At 22 to 174 the chain is on the extracellular side; it reads TLVGGHVLVY…DELPFNINTQ (153 aa). The region spanning 89–151 is the PA domain; the sequence is FVALVARGEC…FVGHTTGKAL (63 aa). 2 N-linked (GlcNAc...) asparagine glycosylation sites follow: Asn109 and Asn132. A helical membrane pass occupies residues 175–195; the sequence is LILPFSILIGMCFIIMVIYMI. At 196–536 the chain is on the cytoplasmic side; it reads YKCIREQRRL…HSASDRQFLI (341 aa). The RING-type; atypical zinc finger occupies 235 to 277; sequence CVICLEDFIEDDKLRVLPCSHPYHTHCIDPWLTENRRVCPICK. 2 disordered regions span residues 287-334 and 350-372; these read RASR…GAAG and HGTFRRGHAGRNPFEESQSSDDE. Residues 307 to 334 are compositionally biased toward low complexity; sequence TPLLQQQQSNGRQVGQVSSASSAGGAAG.

Belongs to the Godzilla family.

The protein resides in the endosome membrane. It catalyses the reaction S-ubiquitinyl-[E2 ubiquitin-conjugating enzyme]-L-cysteine + [acceptor protein]-L-lysine = [E2 ubiquitin-conjugating enzyme]-L-cysteine + N(6)-ubiquitinyl-[acceptor protein]-L-lysine.. The protein operates within protein modification; protein ubiquitination. Endosomal E3 ubiquitin-protein ligase that regulates the recycling endosome pathway by mediating ubiquitination of Synaptobrevin (Syb). Also acts as a regulator of transcytosis in wing imaginal disks by catalyzing ubiquitination of Syb: ubiquitination of Syb promotes transcytosis of wingless (wg) to the basolateral surface. This is E3 ubiquitin-protein ligase Godzilla from Drosophila melanogaster (Fruit fly).